The following is a 212-amino-acid chain: Methylthioribulose-1-phosphate dehydratase (212 aa).

2 residues coordinate Zn(2+): H97 and H99.

The protein belongs to the aldolase class II family. MtnB subfamily. Homotetramer. It depends on Zn(2+) as a cofactor.

It catalyses the reaction 5-(methylsulfanyl)-D-ribulose 1-phosphate = 5-methylsulfanyl-2,3-dioxopentyl phosphate + H2O. The protein operates within amino-acid biosynthesis; L-methionine biosynthesis via salvage pathway; L-methionine from S-methyl-5-thio-alpha-D-ribose 1-phosphate: step 2/6. Catalyzes the dehydration of methylthioribulose-1-phosphate (MTRu-1-P) into 2,3-diketo-5-methylthiopentyl-1-phosphate (DK-MTP-1-P). The polypeptide is Methylthioribulose-1-phosphate dehydratase (Bacillus cytotoxicus (strain DSM 22905 / CIP 110041 / 391-98 / NVH 391-98)).